We begin with the raw amino-acid sequence, 91 residues long: Small ribosomal subunit protein uS17 (91 aa).

This sequence belongs to the universal ribosomal protein uS17 family. As to quaternary structure, part of the 30S ribosomal subunit.

Functionally, one of the primary rRNA binding proteins, it binds specifically to the 5'-end of 16S ribosomal RNA. This Salinispora tropica (strain ATCC BAA-916 / DSM 44818 / JCM 13857 / NBRC 105044 / CNB-440) protein is Small ribosomal subunit protein uS17.